A 91-amino-acid chain; its full sequence is Small ribosomal subunit protein uS15 (91 aa).

It belongs to the universal ribosomal protein uS15 family. As to quaternary structure, part of the 30S ribosomal subunit. Forms a bridge to the 50S subunit in the 70S ribosome, contacting the 23S rRNA.

In terms of biological role, one of the primary rRNA binding proteins, it binds directly to 16S rRNA where it helps nucleate assembly of the platform of the 30S subunit by binding and bridging several RNA helices of the 16S rRNA. Functionally, forms an intersubunit bridge (bridge B4) with the 23S rRNA of the 50S subunit in the ribosome. This Amoebophilus asiaticus (strain 5a2) protein is Small ribosomal subunit protein uS15.